Here is a 992-residue protein sequence, read N- to C-terminus: MKGLGDSRPRHLSDSLDPPHEPLFAGPDRNPYLLSPTEAFAREARFPGQNTLPGDGLFPLNNQLPPPSSTFPRIHYNSHFEVPEESPFPSHAQATKINRLPANLLDQFEKQLPIHRDGFSTLQFPRGEAKARGESPGRIRHLVHSVQRLFFTKAPSMEGTTGKVGGNGGKKGVLEDGKGRRAKSKERAKAGEPKRRSRSNISGWWSSDDNLDGEGGAFRSGPASGLMTLGRQPERTQPRYFMHAYNTISGHMLKTTKNTTTELTAPPPPPAPPATCPSLGVGTDTNYVKRGSWSTLTLSHAHEVCQKTSATLDKSLLKSKSCHQGLAYHYLQVPGGGGEWSTTLLSPRDMDSTAEGPIPCRRMRSGSYIKAMGDEDSDESGGGSPKPSPKTAARRQSYLRATQQSLGEQSNPRRSLDRLDSVDMPLPSKYPSWEEDYNPISDSLNDSGCISQVFGQASLIPQLFGHDQQVREADLSDQYEAACESACSEAESTAAEALDLSLPSYFRSRSHSYLRAIQAGCSQEEDSVSLQSLSPPPSTGSLSNSRTLPSSSCLVAYKKTPPPVPPRTTSKPFISVTVQSSTESAQDTYLDSQDHKSEVTSQSGLSNSSDSLDSSTRPPSVTRGGITPGPEAPEPPPKHAALKSEHGTLTSSESHSEAVPKRKLSSIGIQVDCIQPVPKEEPSPATKFQSIGVQVEDDWRSSAPSHSMSSRRDTDSDTQDANDSSCKSSERSLPDCTSHPNSISIDAGPRQAPKIAQIKRNLSYGDNSDPALEASSLPPPDPWMETSSSSPAEPAQPGACRRDGYWFLKLLQAETERLEGWCCQMDKETKENNLSEEVLGKVLSAVGSAQLLMSQKFQQFRGICEQNLNPDANPRPTAQDLAGFWDLLQLSIEDISMKFDELYHLKANSWQLVETPEKRKEEKKPPPPVPKKPAKSKAAVSRDKASDAGDKQRQEARKRLLAAKRAASVRQNSATESADSIEIYVPEAQTRL.

Positions 1–20 (MKGLGDSRPRHLSDSLDPPH) are enriched in basic and acidic residues. Disordered regions lie at residues 1–31 (MKGL…DRNP) and 154–226 (APSM…ASGL). Over residues 162 to 171 (GKVGGNGGKK) the composition is skewed to gly residues. The span at 172–194 (GVLEDGKGRRAKSKERAKAGEPK) shows a compositional bias: basic and acidic residues. Positions 199 to 208 (SNISGWWSSD) are enriched in polar residues. Phosphoserine occurs at positions 206 and 207. Residue Arg290 is modified to Omega-N-methylarginine. 5 disordered regions span residues 342 to 435 (TTLL…SWEE), 527 to 665 (SVSL…RKLS), 677 to 751 (VPKE…GPRQ), 763 to 798 (SYGD…AQPG), and 915 to 992 (TPEK…QTRL). Phosphoserine occurs at positions 377, 380, 384, 388, 405, 415, and 421. The span at 399–413 (LRATQQSLGEQSNPR) shows a compositional bias: polar residues. Residues 528–554 (VSLQSLSPPPSTGSLSNSRTLPSSSCL) are compositionally biased toward low complexity. Residues 576–591 (VTVQSSTESAQDTYLD) show a composition bias toward polar residues. 6 positions are modified to phosphoserine: Ser580, Ser581, Ser609, Ser611, Ser665, and Ser744. Over residues 600–620 (TSQSGLSNSSDSLDSSTRPPS) the composition is skewed to low complexity. Residue Thr915 is modified to Phosphothreonine. 2 stretches are compositionally biased toward basic and acidic residues: residues 915–925 (TPEKRKEEKKP) and 940–958 (VSRD…EARK). The segment covering 969-978 (VRQNSATESA) has biased composition (polar residues). Phosphoserine is present on Ser973.

The protein belongs to the SAPAP family. In terms of assembly, interacts with DLG1 and DLG4/PSD-95. As to expression, expressed in brain.

The protein resides in the membrane. Its function is as follows. May play a role in the molecular organization of synapses and neuronal cell signaling. Could be an adapter protein linking ion channel to the subsynaptic cytoskeleton. May induce enrichment of PSD-95/SAP90 at the plasma membrane. The sequence is that of Disks large-associated protein 4 (Dlgap4) from Rattus norvegicus (Rat).